We begin with the raw amino-acid sequence, 189 residues long: Putative OVARIAN TUMOR DOMAIN-containing deubiquitinating enzyme 8 (189 aa).

Positions 1–103 (MMKSDGNCQF…GIHFNSIYKK (103 aa)) constitute an OTU domain. The active site involves Asp-5. Cys-8 functions as the Nucleophile in the catalytic mechanism. His-96 is a catalytic residue. A disordered region spans residues 105-189 (KEKGSRSSSS…NRNHHFHYSE (85 aa)). Residues 120–181 (WMKLQRKKEN…KKEKKEKKNR (62 aa)) are a coiled coil. 2 consecutive short sequence motifs (nuclear localization signal) follow at residues 125–132 (RKKENEAK) and 163–170 (KKKAKVQK). Residues 126-174 (KKENEAKKKEEEEKERKDMEKEEKKKDKEDKKKDKEDKKKAKVQKEKKE) are compositionally biased toward basic and acidic residues. Over residues 175–189 (KKEKKNRNHHFHYSE) the composition is skewed to basic residues.

The protein belongs to the peptidase C85 family.

The protein localises to the nucleus. The catalysed reaction is Thiol-dependent hydrolysis of ester, thioester, amide, peptide and isopeptide bonds formed by the C-terminal Gly of ubiquitin (a 76-residue protein attached to proteins as an intracellular targeting signal).. Functionally, hydrolase that can remove conjugated ubiquitin from proteins in vitro and may therefore play an important regulatory role at the level of protein turnover by preventing degradation. The sequence is that of Putative OVARIAN TUMOR DOMAIN-containing deubiquitinating enzyme 8 from Arabidopsis thaliana (Mouse-ear cress).